The following is a 140-amino-acid chain: Holo-[acyl-carrier-protein] synthase (140 aa).

Mg(2+) is bound by residues aspartate 8 and glutamate 62.

The protein belongs to the P-Pant transferase superfamily. AcpS family. Mg(2+) serves as cofactor.

The protein resides in the cytoplasm. It carries out the reaction apo-[ACP] + CoA = holo-[ACP] + adenosine 3',5'-bisphosphate + H(+). Transfers the 4'-phosphopantetheine moiety from coenzyme A to a Ser of acyl-carrier-protein. This is Holo-[acyl-carrier-protein] synthase from Cupriavidus taiwanensis (strain DSM 17343 / BCRC 17206 / CCUG 44338 / CIP 107171 / LMG 19424 / R1) (Ralstonia taiwanensis (strain LMG 19424)).